Here is a 389-residue protein sequence, read N- to C-terminus: Succinate--CoA ligase [ADP-forming] subunit beta (389 aa).

An ATP-grasp domain is found at 9 to 244; sequence KQLLAEYGIP…KTQEDETEVT (236 aa). ATP-binding positions include Lys46, 53 to 55, Gly102, and Glu107; that span reads GRG. Mg(2+) contacts are provided by Asn199 and Asp213. Residues Asn264 and 321-323 each bind substrate; that span reads GIV.

The protein belongs to the succinate/malate CoA ligase beta subunit family. In terms of assembly, heterotetramer of two alpha and two beta subunits. It depends on Mg(2+) as a cofactor.

The enzyme catalyses succinate + ATP + CoA = succinyl-CoA + ADP + phosphate. The catalysed reaction is GTP + succinate + CoA = succinyl-CoA + GDP + phosphate. It participates in carbohydrate metabolism; tricarboxylic acid cycle; succinate from succinyl-CoA (ligase route): step 1/1. Succinyl-CoA synthetase functions in the citric acid cycle (TCA), coupling the hydrolysis of succinyl-CoA to the synthesis of either ATP or GTP and thus represents the only step of substrate-level phosphorylation in the TCA. The beta subunit provides nucleotide specificity of the enzyme and binds the substrate succinate, while the binding sites for coenzyme A and phosphate are found in the alpha subunit. The polypeptide is Succinate--CoA ligase [ADP-forming] subunit beta (Xanthomonas axonopodis pv. citri (strain 306)).